A 271-amino-acid polypeptide reads, in one-letter code: Tryptophan synthase alpha chain (271 aa).

Active-site proton acceptor residues include Glu-49 and Asp-60.

This sequence belongs to the TrpA family. As to quaternary structure, tetramer of two alpha and two beta chains.

It carries out the reaction (1S,2R)-1-C-(indol-3-yl)glycerol 3-phosphate + L-serine = D-glyceraldehyde 3-phosphate + L-tryptophan + H2O. The protein operates within amino-acid biosynthesis; L-tryptophan biosynthesis; L-tryptophan from chorismate: step 5/5. Its function is as follows. The alpha subunit is responsible for the aldol cleavage of indoleglycerol phosphate to indole and glyceraldehyde 3-phosphate. This chain is Tryptophan synthase alpha chain, found in Burkholderia cenocepacia (strain ATCC BAA-245 / DSM 16553 / LMG 16656 / NCTC 13227 / J2315 / CF5610) (Burkholderia cepacia (strain J2315)).